The chain runs to 138 residues: Acidic phospholipase A2 CoaPLA2 (138 aa).

A signal peptide spans 1–16 (MRTLWIVAVLLLGVEG). Intrachain disulfides connect Cys-42-Cys-131, Cys-44-Cys-60, Cys-59-Cys-111, Cys-65-Cys-138, Cys-66-Cys-104, Cys-73-Cys-97, and Cys-91-Cys-102. Residues Tyr-43, Gly-45, and Gly-47 each contribute to the Ca(2+) site. His-63 is a catalytic residue. Asp-64 lines the Ca(2+) pocket. Asp-105 is a catalytic residue.

It belongs to the phospholipase A2 family. Group II subfamily. D49 sub-subfamily. As to quaternary structure, homodimer. Requires Ca(2+) as cofactor. In terms of tissue distribution, expressed by the venom gland.

It localises to the secreted. The catalysed reaction is a 1,2-diacyl-sn-glycero-3-phosphocholine + H2O = a 1-acyl-sn-glycero-3-phosphocholine + a fatty acid + H(+). In terms of biological role, snake venom phospholipase A2 (PLA2) that shows very low inhibition of ADP-induced platelet aggregation in platelet-rich plasma of human, rabbit and guinea pig. Shows edema-inducing activity and myotoxicity. PLA2 catalyzes the calcium-dependent hydrolysis of the 2-acyl groups in 3-sn-phosphoglycerides. The polypeptide is Acidic phospholipase A2 CoaPLA2 (Crotalus lutosus abyssus (Grand Canyon rattlesnake)).